A 448-amino-acid chain; its full sequence is Immunoglobulin G-binding protein G (448 aa).

Residues 1 to 33 form the signal peptide; that stretch reads MEKEKKVKYFLRKSAFGLASVSAAFLVGSTVFA. Repeat copies occupy residues 104 to 140, 179 to 215, 228 to 282, and 298 to 352. Residues 104–215 form a 2 X 37 AA repeats region; sequence LAKAKADALK…AKTVEGVKEL (112 aa). Residues 228 to 352 are 2 X 55 AA repeats; sequence TYKLILNGKT…DATKTFTVTE (125 aa). The segment at 358–422 is disordered; that stretch reads PGDAPTEPEK…TLPTTGEGSN (65 aa). Residues 384–412 are compositionally biased toward basic and acidic residues; sequence AKDDAKKDDTKKEDAKKPEAKKDDAKKAE. The segment at 386 to 410 is 5 X 5 AA repeats of [DE]-D-A-K-K; the sequence is DDAKKDDTKKEDAKKPEAKKDDAKK. An LPXTG sorting signal motif is present at residues 414–418; the sequence is LPTTG. T417 bears the Pentaglycyl murein peptidoglycan amidated threonine mark. The propeptide at 418–448 is removed by sortase; it reads GEGSNPFFTAAALAVMAGAGALAVASKRKED.

It is found in the secreted. The protein resides in the cell wall. Functionally, binds to the constant Fc region of IgG with high affinity. This Streptococcus sp. group G protein is Immunoglobulin G-binding protein G (spg).